We begin with the raw amino-acid sequence, 214 residues long: Heat shock protein 30 (214 aa).

The 118-residue stretch at 66–183 (VPSSLTIQPV…AERVVPINCS (118 aa)) folds into the sHSP domain. A disordered region spans residues 193-214 (SKTEGSITDTQKKQENTISKED). The segment covering 202–214 (TQKKQENTISKED) has biased composition (basic and acidic residues).

It belongs to the small heat shock protein (HSP20) family.

The sequence is that of Heat shock protein 30 (hsp30) from Oncorhynchus tshawytscha (Chinook salmon).